The following is a 191-amino-acid chain: Protein Ves (191 aa).

The protein belongs to the Ves family.

The polypeptide is Protein Ves (Shigella flexneri).